We begin with the raw amino-acid sequence, 321 residues long: Protein ATP1B4 (321 aa).

The interval 1 to 41 (MEPGMEMNTASEGGTRRGPENKHEEKVQDPNRGEAETKAEM) is disordered. Over 1–72 (MEPGMEMNTA…RTCMGRTAKS (72 aa)) the chain is Cytoplasmic. Residues 14–41 (GTRRGPENKHEEKVQDPNRGEAETKAEM) show a composition bias toward basic and acidic residues. The helical transmembrane segment at 73 to 93 (WGLILLFYFIFYTCLAGMFAF) threads the bilayer. Over 94–321 (CMYVMLLTLS…RIIFTLSIGK (228 aa)) the chain is Extracellular. N-linked (GlcNAc...) asparagine glycosylation is found at N132, N176, and N193. A disulfide bridge connects residues C165 and C184. Disulfide bonds link C194/C210 and C233/C293. N-linked (GlcNAc...) asparagine glycans are attached at residues N239, N252, and N270.

It belongs to the X(+)/potassium ATPases subunit beta family. In terms of assembly, composed of two subunits: alpha (catalytic) and beta (accessory). Glycosylated. Expressed in skeletal muscle, intestine, heart, brain, retina, inner ear and skin.

It is found in the membrane. Its function is as follows. This is the non-catalytic component of the active enzyme, which catalyzes the hydrolysis of ATP coupled with the exchange of Na(+) and K(+) ions across the plasma membrane. The polypeptide is Protein ATP1B4 (ATP1B4) (Gallus gallus (Chicken)).